Here is a 92-residue protein sequence, read N- to C-terminus: Small ribosomal subunit protein uS19 (92 aa).

It belongs to the universal ribosomal protein uS19 family.

Its function is as follows. Protein S19 forms a complex with S13 that binds strongly to the 16S ribosomal RNA. The protein is Small ribosomal subunit protein uS19 of Ruegeria pomeroyi (strain ATCC 700808 / DSM 15171 / DSS-3) (Silicibacter pomeroyi).